Here is a 313-residue protein sequence, read N- to C-terminus: Ribosomal RNA small subunit methyltransferase H (313 aa).

S-adenosyl-L-methionine-binding positions include 35–37 (GGH), D55, F81, D103, and Q110.

This sequence belongs to the methyltransferase superfamily. RsmH family.

The protein resides in the cytoplasm. The enzyme catalyses cytidine(1402) in 16S rRNA + S-adenosyl-L-methionine = N(4)-methylcytidine(1402) in 16S rRNA + S-adenosyl-L-homocysteine + H(+). Functionally, specifically methylates the N4 position of cytidine in position 1402 (C1402) of 16S rRNA. This is Ribosomal RNA small subunit methyltransferase H from Pseudomonas paraeruginosa (strain DSM 24068 / PA7) (Pseudomonas aeruginosa (strain PA7)).